A 297-amino-acid chain; its full sequence is Protein-methionine-sulfoxide reductase catalytic subunit MsrP (297 aa).

The segment at residues 1–35 (MLITPEKLYKQRRNFLKLGAGALISSSVLASKLSA) is a signal peptide (tat-type signal). Residues 62-63 (YE), C116, T151, N201, R206, and 217-219 (SIK) each bind Mo-molybdopterin.

It belongs to the MsrP family. Heterodimer of a catalytic subunit (MsrP) and a heme-binding subunit (MsrQ). It depends on Mo-molybdopterin as a cofactor. Predicted to be exported by the Tat system. The position of the signal peptide cleavage has not been experimentally proven.

It is found in the periplasm. It carries out the reaction L-methionyl-[protein] + a quinone + H2O = L-methionyl-(S)-S-oxide-[protein] + a quinol. The enzyme catalyses L-methionyl-[protein] + a quinone + H2O = L-methionyl-(R)-S-oxide-[protein] + a quinol. Part of the MsrPQ system that repairs oxidized periplasmic proteins containing methionine sulfoxide residues (Met-O), using respiratory chain electrons. Thus protects these proteins from oxidative-stress damage caused by reactive species of oxygen and chlorine generated by the host defense mechanisms. MsrPQ is essential for the maintenance of envelope integrity under bleach stress, rescuing a wide series of structurally unrelated periplasmic proteins from methionine oxidation. The catalytic subunit MsrP is non-stereospecific, being able to reduce both (R-) and (S-) diastereoisomers of methionine sulfoxide. The polypeptide is Protein-methionine-sulfoxide reductase catalytic subunit MsrP (Campylobacter jejuni subsp. jejuni serotype O:2 (strain ATCC 700819 / NCTC 11168)).